A 127-amino-acid chain; its full sequence is Small ribosomal subunit protein uS13 (127 aa).

The disordered stretch occupies residues 90 to 127 (RRHRQGLPVRGQRTRTNARTRRGRRLTVAGKKKTPAKK). A compositionally biased stretch (basic residues) spans 101–127 (QRTRTNARTRRGRRLTVAGKKKTPAKK).

The protein belongs to the universal ribosomal protein uS13 family. In terms of assembly, part of the 30S ribosomal subunit. Forms a loose heterodimer with protein S19. Forms two bridges to the 50S subunit in the 70S ribosome.

In terms of biological role, located at the top of the head of the 30S subunit, it contacts several helices of the 16S rRNA. In the 70S ribosome it contacts the 23S rRNA (bridge B1a) and protein L5 of the 50S subunit (bridge B1b), connecting the 2 subunits; these bridges are implicated in subunit movement. Contacts the tRNAs in the A and P-sites. This Synechocystis sp. (strain ATCC 27184 / PCC 6803 / Kazusa) protein is Small ribosomal subunit protein uS13.